A 211-amino-acid polypeptide reads, in one-letter code: Endonuclease YncB (211 aa).

The signal sequence occupies residues 1-19 (MKKILISMIAIVLSITLAA). A lipid anchor (N-palmitoyl cysteine) is attached at C20. A lipid anchor (S-diacylglycerol cysteine) is attached at C20. A disordered region spans residues 24 to 63 (HAAKNHSDSNGTEQVSQDTHSNEYNQTEQKAGTPHSKNQK). The segment covering 31 to 53 (DSNGTEQVSQDTHSNEYNQTEQK) has biased composition (polar residues). In terms of domain architecture, TNase-like spans 64–197 (KLVNVTLDRA…KSDKLSIWSK (134 aa)). D77 contacts Ca(2+). Residue R91 is part of the active site. D96 and T97 together coordinate Ca(2+). Residues E99 and R142 contribute to the active site.

It belongs to the thermonuclease family. It depends on Ca(2+) as a cofactor.

The protein localises to the cell membrane. With respect to regulation, inhibited by aurintricalboxylic acid but not by Zn(2+). Its function is as follows. Shows DNase activity on double strand DNA. The protein is Endonuclease YncB (yncB) of Bacillus subtilis (strain 168).